The chain runs to 378 residues: UPF0754 membrane protein BCE_0952 (378 aa).

2 helical membrane-spanning segments follow: residues 1 to 21 (MNIWLSMLTTTGLGAIIGGFT) and 357 to 377 (YLGALLGGMIGIVQGLLLLFL).

Belongs to the UPF0754 family.

The protein resides in the cell membrane. The sequence is that of UPF0754 membrane protein BCE_0952 from Bacillus cereus (strain ATCC 10987 / NRS 248).